A 509-amino-acid chain; its full sequence is Sulfoacetate--CoA ligase (509 aa).

Positions 320–340 are disordered; sequence AFSNPLDPGQRRIGSIGRPSG.

This sequence belongs to the ATP-dependent AMP-binding enzyme family.

Its subcellular location is the cytoplasm. The catalysed reaction is sulfoacetate + ATP + CoA = sulfoacetyl-CoA + AMP + diphosphate. Its function is as follows. Involved in the degradation of sulfoacetate, a widespread natural product. Catalyzes the CoA- and ATP-dependent conversion of sulfoacetate to sulfoacetyl-CoA and AMP. In Cupriavidus necator (strain ATCC 17699 / DSM 428 / KCTC 22496 / NCIMB 10442 / H16 / Stanier 337) (Ralstonia eutropha), this protein is Sulfoacetate--CoA ligase.